The chain runs to 427 residues: 3-phosphoshikimate 1-carboxyvinyltransferase (427 aa).

3-phosphoshikimate contacts are provided by Lys22, Ser23, and Arg27. Lys22 serves as a coordination point for phosphoenolpyruvate. Residues Gly96 and Arg124 each coordinate phosphoenolpyruvate. 3-phosphoshikimate is bound by residues Ser169, Ser170, Gln171, Ser197, Asp313, Asn336, and Lys340. Residue Gln171 coordinates phosphoenolpyruvate. Asp313 acts as the Proton acceptor in catalysis. Residues Arg344, Arg386, and Lys411 each coordinate phosphoenolpyruvate.

This sequence belongs to the EPSP synthase family. Monomer.

The protein resides in the cytoplasm. The catalysed reaction is 3-phosphoshikimate + phosphoenolpyruvate = 5-O-(1-carboxyvinyl)-3-phosphoshikimate + phosphate. The protein operates within metabolic intermediate biosynthesis; chorismate biosynthesis; chorismate from D-erythrose 4-phosphate and phosphoenolpyruvate: step 6/7. Functionally, catalyzes the transfer of the enolpyruvyl moiety of phosphoenolpyruvate (PEP) to the 5-hydroxyl of shikimate-3-phosphate (S3P) to produce enolpyruvyl shikimate-3-phosphate and inorganic phosphate. This is 3-phosphoshikimate 1-carboxyvinyltransferase from Klebsiella pneumoniae subsp. pneumoniae (strain ATCC 700721 / MGH 78578).